The primary structure comprises 120 residues: UPF0231 protein YE0706 (120 aa).

The protein belongs to the UPF0231 family.

This is UPF0231 protein YE0706 from Yersinia enterocolitica serotype O:8 / biotype 1B (strain NCTC 13174 / 8081).